The sequence spans 158 residues: 3-hydroxyacyl-[acyl-carrier-protein] dehydratase FabZ (158 aa).

The active site involves His61.

Belongs to the thioester dehydratase family. FabZ subfamily.

The protein localises to the cytoplasm. The enzyme catalyses a (3R)-hydroxyacyl-[ACP] = a (2E)-enoyl-[ACP] + H2O. Functionally, involved in unsaturated fatty acids biosynthesis. Catalyzes the dehydration of short chain beta-hydroxyacyl-ACPs and long chain saturated and unsaturated beta-hydroxyacyl-ACPs. This Methylobacterium radiotolerans (strain ATCC 27329 / DSM 1819 / JCM 2831 / NBRC 15690 / NCIMB 10815 / 0-1) protein is 3-hydroxyacyl-[acyl-carrier-protein] dehydratase FabZ.